Consider the following 212-residue polypeptide: Ras-related protein Rab-2A (212 aa).

Ala-2 bears the N-acetylalanine mark. Positions 2–19 (AYAYLFKYIIIGDTGVGK) are required for interaction with PRKCI. GTP-binding residues include Gly-16, Val-17, Gly-18, Lys-19, Ser-20, Cys-21, and Thr-38. Ser-20 is a binding site for Mg(2+). The short motif at 37-42 (LTMGVE) is the Switch 1 element. The Mg(2+) site is built by Thr-38 and Asp-61. The Switch 2 signature appears at 63-72 (AGQESFRSIT). Positions 64, 119, 120, 122, 150, and 151 each coordinate GTP. Residues 190-212 (QHAATNASHGGNQGGQQAGGGCC) are disordered. Residues 200 to 212 (GNQGGQQAGGGCC) show a composition bias toward gly residues. Residues Cys-211 and Cys-212 are each lipidated (S-geranylgeranyl cysteine).

This sequence belongs to the small GTPase superfamily. Rab family. As to quaternary structure, interacts with PRKCI. Interacts with TRIP11. Interacts (in GTP-bound form) with GARIN1B. Interacts (GTP-bound) with HOPS complex component VPS39; interaction contributes to obtaining a functional HOPS complex that promotes autophagosome-lysosome membrane fusion driven by STX17-SNAP29-VAMP8. May interact with VPS41. Mg(2+) is required as a cofactor. In terms of processing, prenylated. Prenylation is required for association with cellular membranes.

Its subcellular location is the endoplasmic reticulum-Golgi intermediate compartment membrane. It localises to the melanosome. The protein resides in the endoplasmic reticulum membrane. The protein localises to the golgi apparatus membrane. It is found in the cytoplasmic vesicle. Its subcellular location is the secretory vesicle. It localises to the acrosome. The protein resides in the autophagosome membrane. The enzyme catalyses GTP + H2O = GDP + phosphate + H(+). Regulated by guanine nucleotide exchange factors (GEFs) which promote the exchange of bound GDP for free GTP, GTPase activating proteins (GAPs) which increase the GTP hydrolysis activity, and GDP dissociation inhibitors (GDIs) which inhibit the dissociation of the nucleotide from the GTPase. Its function is as follows. The small GTPases Rab are key regulators of intracellular membrane trafficking, from the formation of transport vesicles to their fusion with membranes. Rabs cycle between active GTP-bound and inactive GDP-bound states. In their active state, drive transport of vesicular carriers from donor organelles to acceptor organelles to regulate the membrane traffic that maintains organelle identity and morphology. RAB2A regulates autophagy by promoting autophagosome-lysosome fusion via recruitment of the HOPS endosomal tethering complex; this process involves autophagosomal RAB2A and lysosomal RAB39A recruitment of HOPS subcomplexes VPS39-VPS11 and VPS41-VPS16-VPS18-VPS33A, respectively, which assemble into a functional complex to mediate membrane tethering and SNAREs-driven membrane fusion. Required for protein transport from the endoplasmic reticulum to the Golgi complex. Regulates the compacted morphology of the Golgi. Together with RAB2B, redundantly required for efficient autophagic flux. This Rattus norvegicus (Rat) protein is Ras-related protein Rab-2A (Rab2a).